The chain runs to 416 residues: 5-hydroxytryptamine receptor 1A-beta (416 aa).

Residues Met-1–Val-35 lie on the Extracellular side of the membrane. N-linked (GlcNAc...) asparagine glycosylation is found at Asn-5, Asn-6, and Asn-18. A helical membrane pass occupies residues Thr-36 to Ala-56. The Cytoplasmic segment spans residues Ala-57–Tyr-70. The chain crosses the membrane as a helical span at residues Leu-71–Val-95. The Extracellular portion of the chain corresponds to Leu-96 to Ile-104. The helical transmembrane segment at Pro-105 to Leu-129 threads the bilayer. Cys-106 and Cys-189 are joined by a disulfide. Asp-113 and Cys-117 together coordinate serotonin. The short motif at Asp-130–Tyr-132 is the DRY motif; important for ligand-induced conformation changes element. Topologically, residues Asp-130–Arg-149 are cytoplasmic. A helical membrane pass occupies residues Ala-150–Ile-171. At Met-172–Pro-195 the chain is on the extracellular side. Residues Trp-196–Gly-218 traverse the membrane as a helical segment. The Cytoplasmic segment spans residues Arg-219–Thr-340. The 1D-myo-inositol 4-phosphate site is built by Lys-339, Thr-340, and Gly-346. A helical transmembrane segment spans residues Leu-341–Phe-364. At Cys-365–Pro-372 the chain is on the extracellular side. The chain crosses the membrane as a helical span at residues His-373–Phe-397. The NPxxY motif; important for ligand-induced conformation changes and signaling signature appears at Asn-390 to Tyr-394. The 1D-myo-inositol 4-phosphate site is built by Phe-397, Asn-398, and Lys-399. Topologically, residues Asn-398–Ala-416 are cytoplasmic.

This sequence belongs to the G-protein coupled receptor 1 family. 5-hydroxytryptamine receptor subfamily.

The protein resides in the cell membrane. G-protein coupled receptor activity is regulated by lipids: phosphatidylinositol 4-phosphate increases HTR1A-mediated activity. Its function is as follows. G-protein coupled receptor for 5-hydroxytryptamine (serotonin). Also functions as a receptor for various drugs and psychoactive substances. Ligand binding causes a conformation change that triggers signaling via guanine nucleotide-binding proteins (G proteins) and modulates the activity of downstream effectors, such as adenylate cyclase. HTR1A is coupled to G(i)/G(o) G alpha proteins and mediates inhibitory neurotransmission: signaling inhibits adenylate cyclase activity and activates a phosphatidylinositol-calcium second messenger system that regulates the release of Ca(2+) ions from intracellular stores. Beta-arrestin family members regulate signaling by mediating both receptor desensitization and resensitization processes. This is 5-hydroxytryptamine receptor 1A-beta (htr1a-B) from Takifugu rubripes (Japanese pufferfish).